The chain runs to 88 residues: Antitoxin VapB3 (88 aa).

In terms of biological role, antitoxin component of a type II toxin-antitoxin (TA) system. In Mycobacterium tuberculosis (strain CDC 1551 / Oshkosh), this protein is Antitoxin VapB3 (vapB3).